The chain runs to 465 residues: Tyrosine 3-monooxygenase (465 aa).

Residues His-294, His-299, and Glu-339 each coordinate Fe cation.

Belongs to the biopterin-dependent aromatic amino acid hydroxylase family. It depends on Fe(2+) as a cofactor.

Its subcellular location is the cytoplasm. It is found in the perinuclear region. The catalysed reaction is (6R)-L-erythro-5,6,7,8-tetrahydrobiopterin + L-tyrosine + O2 = (4aS,6R)-4a-hydroxy-L-erythro-5,6,7,8-tetrahydrobiopterin + L-dopa. Its pathway is catecholamine biosynthesis; dopamine biosynthesis; dopamine from L-tyrosine: step 1/2. The chain is Tyrosine 3-monooxygenase (TH) from Schistosoma mansoni (Blood fluke).